We begin with the raw amino-acid sequence, 181 residues long: MEPEIKIVNVVVSTQIGTDIDLEYAADILDNAEYEPEQFPGLVCRLSDPKVALLIFRSGKLNCTGAKSKDDAVIAINKIIKELQEAGMDIIDNPEVNVQNMVATTELGMEPNLDDISTLECTEYEPEQFPGLVYRLSDPKVVVLIFGSGKVVITGLKRIDDAYVAFNKILTTLKELEEELY.

2 repeat units span residues 7 to 83 (IVNV…IKEL) and 98 to 173 (VQNM…LTTL).

It belongs to the TBP family.

General factor that plays a role in the activation of archaeal genes transcribed by RNA polymerase. Binds specifically to the TATA box promoter element which lies close to the position of transcription initiation. The chain is TATA-box-binding protein from Methanococcus maripaludis (strain C7 / ATCC BAA-1331).